The primary structure comprises 287 residues: Glucose uptake protein GlcU (287 aa).

A run of 8 helical transmembrane segments spans residues 4-26 (LLAL…LGGG), 38-60 (ALIV…IFIV), 110-132 (WSTP…GIIL), 153-175 (ILIL…LFNV), 180-197 (ALLP…VLTY), 210-227 (ILPG…FISQ), 232-254 (VATS…IFIL), and 261-283 (RQLI…LGIA).

It belongs to the GRP transporter (TC 2.A.7.5) family.

The protein localises to the cell membrane. Involved in the uptake of glucose. This is Glucose uptake protein GlcU (glcU) from Bacillus subtilis (strain 168).